A 537-amino-acid chain; its full sequence is Cytochrome P450 monooxygenase ltmQ (537 aa).

The chain crosses the membrane as a helical span at residues 10 to 30 (FPKLNFATIVISGATIIGIIF). N-linked (GlcNAc...) asparagine glycans are attached at residues Asn182, Asn188, and Asn310. Residue Cys476 participates in heme binding.

The protein belongs to the cytochrome P450 family. Requires heme as cofactor.

Its subcellular location is the membrane. The protein operates within secondary metabolite biosynthesis. Cytochrome P450 monooxygenase; part of the gene clusters that mediates the biosynthesis of lolitrems, indole-diterpene mycotoxins that are potent tremorgens in mammals, and are synthesized by clavicipitaceous fungal endophytes in association with their grass hosts. The geranylgeranyl diphosphate (GGPP) synthase ltmG is proposed to catalyze the first step in lolitrem biosynthesis. LtmG catalyzes a series of iterative condensations of isopentenyl diphosphate (IPP) with dimethylallyl diphosphate (DMAPP), geranyl diphosphate (GPP), and farnesyl diphosphate (FPP), to form GGPP. GGPP then condenses with indole-3-glycerol phosphate to form 3-geranylgeranylindole, an acyclic intermediate, to be incorporated into paxilline. Either ltmG or ltmC could be responsible for this step, as both are putative prenyl transferases. The FAD-dependent monooxygenase ltmM then catalyzes the epoxidation of the two terminal alkenes of the geranylgeranyl moiety, which is subsequently cyclized by ltmB, to paspaline. The cytochrome P450 monooxygenases ltmQ and ltmP can sequentially oxidize paspaline to terpendole E and terpendole F. Alternatively, ltmP converts paspaline to an intermediate which is oxidized by ltmQ to terpendole F. LtmF, ltmK, ltmE and ltmJ appear to be unique to the epichloe endophytes. The prenyltransferase ltmF is involved in the 27-hydroxyl-O-prenylation. The cytochrome P450 monooxygenase ltmK is required for the oxidative acetal ring formation. The multi-functional prenyltransferase ltmE is required for C20- and C21-prenylations of the indole ring of paspalanes and acts together with the cytochrome P450 monooxygenase ltmJ to yield lolitremanes by multiple oxidations and ring closures. The stereoisomer pairs of lolitriol and lolitrem N or lolitrem B and lolitrem F may be attributed to variations in the way in which ring closure can occur under the action of ltmJ. While the major product of this pathway is lolitrem B, the prenyl transferases and cytochrome P450 monooxygenases identified in this pathway have a remarkable versatility in their regio- and stereo-specificities to generate a diverse range of metabolites that are products of a metabolic grid rather than a linear pathway. The sequence is that of Cytochrome P450 monooxygenase ltmQ from Epichloe festucae var. lolii (Neotyphodium lolii).